The following is a 356-amino-acid chain: uncharacterized protein (356 aa).

The chain crosses the membrane as a helical span at residues 8–28 (ILGFVLFVLGAAIFLTEVMHS).

It to C.elegans C41C4.1 and C18B2.1.

The protein localises to the membrane. This is an uncharacterized protein from Caenorhabditis elegans.